A 257-amino-acid chain; its full sequence is Regulator of G-protein signaling 7-binding protein (257 aa).

Residues 1–45 (MSSAPNGRKKRPSRSTRSSIFQISKPPLQSGDWERRGSGSESAHK) are disordered. Residues 32 to 45 (DWERRGSGSESAHK) show a composition bias toward basic and acidic residues. The Nuclear localization signal motif lies at 242–247 (RRRKRR). 2 S-palmitoyl cysteine lipidation sites follow: cysteine 252 and cysteine 253.

It belongs to the RGS7BP/RGS9BP family. Interacts with 'R7' family proteins RGS6, RGS7, RGS9 and RGS11. Component of some R7-Gbeta5 complex composed of some R7 protein (RGS6, RGS7, RGS9 or RGS11), Gbeta5 (GNB5) and RGS7BP. Palmitoylated. Undergoes rapid palmitoylation turnover. De novo and turnover palmitoylation are both mediated by ZDHHC2. Palmitoylation regulates the cell membrane and nuclear shuttling and the regulation of GPCR signaling. Upon depalmitoylation, it is targeted from the plasma membrane into the nucleus. GPCR signaling inhibits depalmitoylation and promotes localization to the plasma membrane. Specifically expressed in the central nervous system including the retina but not in other non-neuronal tissues (at protein level).

It localises to the nucleus. The protein resides in the cytoplasm. Its subcellular location is the cell membrane. Functionally, regulator of G protein-coupled receptor (GPCR) signaling. Regulatory subunit of the R7-Gbeta5 complexes that acts by controlling the subcellular location of the R7-Gbeta5 complexes. When palmitoylated, it targets the R7-Gbeta5 complexes to the plasma membrane, leading to inhibit G protein alpha subunits. When it is unpalmitoylated, the R7-Gbeta5 complexes undergo a nuclear/cytoplasmic shuttling. May also act by controlling the proteolytic stability of R7 proteins, probably by protecting them from degradation. This is Regulator of G-protein signaling 7-binding protein (Rgs7bp) from Mus musculus (Mouse).